A 557-amino-acid chain; its full sequence is Anti-Muellerian hormone type-2 receptor (557 aa).

The N-terminal stretch at 1 to 17 (MLGTLGLWTLLPAAAQV) is a signal peptide. Residues 18–144 (SPNRRTCVFF…QEPQATPGGP (127 aa)) are Extracellular-facing. Cystine bridges form between Cys-55-Cys-79 and Cys-92-Cys-109. An N-linked (GlcNAc...) asparagine glycan is attached at Asn-66. N-linked (GlcNAc...) asparagine glycosylation occurs at Asn-119. The chain crosses the membrane as a helical span at residues 145 to 165 (IWMAQLLLGVFLVLLLSIIIL). The Cytoplasmic segment spans residues 166-557 (ALLQRKACRV…SVQQGSGSKS (392 aa)). Residues 201 to 511 (LRFSQVIQEG…RLAALAYPQV (311 aa)) form the Protein kinase domain. ATP-binding positions include 207–215 (IQEGGHAVV) and Lys-228. Asp-331 (proton acceptor) is an active-site residue.

Belongs to the protein kinase superfamily. TKL Ser/Thr protein kinase family. TGFB receptor subfamily. Interacts with type I receptor ACVR1. The cofactor is Mg(2+). Requires Mn(2+) as cofactor.

The protein resides in the membrane. It carries out the reaction L-threonyl-[receptor-protein] + ATP = O-phospho-L-threonyl-[receptor-protein] + ADP + H(+). The enzyme catalyses L-seryl-[receptor-protein] + ATP = O-phospho-L-seryl-[receptor-protein] + ADP + H(+). Functionally, on ligand binding, forms a receptor complex consisting of two type II and two type I transmembrane serine/threonine kinases. Type II receptors phosphorylate and activate type I receptors which autophosphorylate, then bind and activate SMAD transcriptional regulators. Receptor for anti-Muellerian hormone. The protein is Anti-Muellerian hormone type-2 receptor (Amhr2) of Rattus norvegicus (Rat).